The following is a 224-amino-acid chain: Serum amyloid P-component (224 aa).

Positions 1–19 are cleaved as a signal peptide; that stretch reads MNKLMSWVSVLIILPEAFA. Positions 24 to 224 constitute a Pentraxin (PTX) domain; the sequence is RGKVFVFPRE…YVIVKPMVWG (201 aa). An N-linked (GlcNAc...) asparagine glycan is attached at Asn-51. A disulfide bond links Cys-55 and Cys-114. Positions 77, 78, 155, 156, and 157 each coordinate Ca(2+). A glycan (N-linked (GlcNAc...) asparagine) is linked at Asn-166. Gln-167 is a Ca(2+) binding site.

The protein belongs to the pentraxin family. In terms of assembly, homopentamer. Pentraxin (or pentaxin) have a discoid arrangement of 5 non-covalently bound subunits. Requires Ca(2+) as cofactor.

It is found in the secreted. The polypeptide is Serum amyloid P-component (APCS) (Bos taurus (Bovine)).